The chain runs to 369 residues: Putative F-box/kelch-repeat protein At4g39760 (369 aa).

Residues 14 to 60 (SLSFSSLPHEIVVSCLARVSGSYYPKLCLVSKQFRSIILSNEIYKAR) form the F-box domain. Kelch repeat units lie at residues 131–177 (ETYI…GQYP), 178–224 (NIYV…KMKM), and 228–274 (NVYV…KNCW).

The protein is Putative F-box/kelch-repeat protein At4g39760 of Arabidopsis thaliana (Mouse-ear cress).